A 397-amino-acid polypeptide reads, in one-letter code: Metallophosphoesterase 1 (397 aa).

A helical membrane pass occupies residues 27-47; that stretch reads IAVVFAVLLFCEFLIYYLAIF. Residues aspartate 77, aspartate 119, asparagine 157, histidine 250, histidine 304, and histidine 306 each coordinate a divalent metal cation. Residues 357 to 377 form a helical membrane-spanning segment; sequence VVLIIYCGMVGFLVVLTLTHF. The Di-lysine motif signature appears at 393-397; that stretch reads KRKTR.

This sequence belongs to the metallophosphoesterase superfamily. MPPE1 family. Interacts with GPI-anchor proteins (via the GPI portion). Interacts with TMED10. The cofactor is Mn(2+).

The protein localises to the endoplasmic reticulum-Golgi intermediate compartment membrane. Metallophosphoesterase that catalyzes the removal of a side-chain ethanolamine-phosphate (EtNP) from the second mannose of the GPI-anchor protein intermediate. Participates in the glycan remodeling steps of GPI-anchor maturation to allow an efficient transport of GPI-anchor proteins from the endoplasmic reticulum to the Golgi. This is Metallophosphoesterase 1 from Pongo abelii (Sumatran orangutan).